We begin with the raw amino-acid sequence, 96 residues long: Phosphoribosyl-ATP pyrophosphatase (96 aa).

It belongs to the PRA-PH family.

The protein resides in the cytoplasm. The catalysed reaction is 1-(5-phospho-beta-D-ribosyl)-ATP + H2O = 1-(5-phospho-beta-D-ribosyl)-5'-AMP + diphosphate + H(+). The protein operates within amino-acid biosynthesis; L-histidine biosynthesis; L-histidine from 5-phospho-alpha-D-ribose 1-diphosphate: step 2/9. The polypeptide is Phosphoribosyl-ATP pyrophosphatase (Methanococcus vannielii (strain ATCC 35089 / DSM 1224 / JCM 13029 / OCM 148 / SB)).